The primary structure comprises 204 residues: Arginine exporter protein ArgO (204 aa).

The next 6 membrane-spanning stretches (helical) occupy residues 1–21, 37–57, 67–87, 111–131, 154–174, and 179–199; these read MWAVYLQGVLLGAAMILPLGP, LMVALLCAVSDMVLISAGIFG, LLLGAVTCGGVAFLLWFGWGA, IIATMLAVTWLNPHVYLDTFV, TASFTWFFALALLAAWLAPWL, and VQRVINFFVGMVMWGIALQLA.

Belongs to the LysE/ArgO transporter (TC 2.A.75) family.

It is found in the cell inner membrane. The catalysed reaction is L-arginine(in) = L-arginine(out). Its function is as follows. Involved in the export of arginine. Important to control the intracellular level of arginine and the correct balance between arginine and lysine. The polypeptide is Arginine exporter protein ArgO (Pectobacterium atrosepticum (strain SCRI 1043 / ATCC BAA-672) (Erwinia carotovora subsp. atroseptica)).